Here is a 365-residue protein sequence, read N- to C-terminus: DNA replication and repair protein RecF (365 aa).

30–37 lines the ATP pocket; the sequence is GDNGEGKT.

Belongs to the RecF family.

Its subcellular location is the cytoplasm. Functionally, the RecF protein is involved in DNA metabolism; it is required for DNA replication and normal SOS inducibility. RecF binds preferentially to single-stranded, linear DNA. It also seems to bind ATP. This is DNA replication and repair protein RecF from Leptospira interrogans serogroup Icterohaemorrhagiae serovar copenhageni (strain Fiocruz L1-130).